Reading from the N-terminus, the 185-residue chain is MMTHLRPALASLLALSLLTGVAYPLALTGIAAVIAPDRAAGSLILREGQVVGSALIGQGFDGPGYLHPRPSASDWNAAGTFASNLGPTSAALLAEVQERQAAYEARNGASAPVDAVTASGSGLDPHVSPANARAQAARIARARGLDEAAVRRLIEAHVEPPLLGLWGQARVDVLAVNLALDAAGA.

Residues 14 to 34 (ALSLLTGVAYPLALTGIAAVI) traverse the membrane as a helical segment.

It belongs to the KdpC family. As to quaternary structure, the system is composed of three essential subunits: KdpA, KdpB and KdpC.

It is found in the cell inner membrane. Part of the high-affinity ATP-driven potassium transport (or Kdp) system, which catalyzes the hydrolysis of ATP coupled with the electrogenic transport of potassium into the cytoplasm. This subunit acts as a catalytic chaperone that increases the ATP-binding affinity of the ATP-hydrolyzing subunit KdpB by the formation of a transient KdpB/KdpC/ATP ternary complex. This chain is Potassium-transporting ATPase KdpC subunit, found in Cereibacter sphaeroides (strain ATCC 17023 / DSM 158 / JCM 6121 / CCUG 31486 / LMG 2827 / NBRC 12203 / NCIMB 8253 / ATH 2.4.1.) (Rhodobacter sphaeroides).